The following is a 202-amino-acid chain: Glycerol-3-phosphate acyltransferase (202 aa).

The next 4 membrane-spanning stretches (helical) occupy residues 2-22 (ANLLFALAAYLIGSVSFAVVV), 82-102 (DTGLAMVALAVFLGHLFPVFH), 119-139 (AIDPILGLGTLATWLIIAFFF), and 158-178 (VLMNGVDVMAGAIFVISVLLI).

It belongs to the PlsY family. In terms of assembly, probably interacts with PlsX.

It localises to the cell inner membrane. It carries out the reaction an acyl phosphate + sn-glycerol 3-phosphate = a 1-acyl-sn-glycero-3-phosphate + phosphate. It participates in lipid metabolism; phospholipid metabolism. Catalyzes the transfer of an acyl group from acyl-phosphate (acyl-PO(4)) to glycerol-3-phosphate (G3P) to form lysophosphatidic acid (LPA). This enzyme utilizes acyl-phosphate as fatty acyl donor, but not acyl-CoA or acyl-ACP. In Cupriavidus taiwanensis (strain DSM 17343 / BCRC 17206 / CCUG 44338 / CIP 107171 / LMG 19424 / R1) (Ralstonia taiwanensis (strain LMG 19424)), this protein is Glycerol-3-phosphate acyltransferase.